Here is a 327-residue protein sequence, read N- to C-terminus: Inactive peptidyl-prolyl cis-trans isomerase FKBP6 (327 aa).

Positions 54 to 143 (DASVLVKYSG…LFEIELIDFL (90 aa)) constitute a PPIase FKBP-type domain. TPR repeat units follow at residues 171–204 (AATE…LHRR), 219–252 (LLVL…DKRN), and 253–286 (AKAL…QPCN).

This sequence belongs to the FKBP6 family. Interacts with HSP72/HSPA2 and CLTC. Interacts with GAPDH; leading to inhibit GAPDH catalytic activity. Interacts (via TPR repeats) with HSP90. In terms of tissue distribution, testis-specific.

The protein localises to the cytoplasm. It is found in the cytosol. Its subcellular location is the nucleus. It localises to the chromosome. Its function is as follows. Co-chaperone required during spermatogenesis to repress transposable elements and prevent their mobilization, which is essential for the germline integrity. Acts via the piRNA metabolic process, which mediates the repression of transposable elements during meiosis by forming complexes composed of piRNAs and Piwi proteins and govern the methylation and subsequent repression of transposons. Acts as a co-chaperone via its interaction with HSP90 and is required for the piRNA amplification process, the secondary piRNA biogenesis. May be required together with HSP90 in removal of 16 nucleotide ping-pong by-products from Piwi complexes, possibly facilitating turnover of Piwi complexes. The sequence is that of Inactive peptidyl-prolyl cis-trans isomerase FKBP6 (Fkbp6) from Mus musculus (Mouse).